Reading from the N-terminus, the 393-residue chain is Formate-dependent phosphoribosylglycinamide formyltransferase (393 aa).

Residues 22 to 23 (EL) and Glu82 contribute to the N(1)-(5-phospho-beta-D-ribosyl)glycinamide site. ATP is bound by residues Arg114, Lys155, 160–165 (SSGKGQ), 195–198 (EGFI), and Glu203. Residues 119–308 (RLAAEELDLP…QFALHARAIL (190 aa)) form the ATP-grasp domain. 2 residues coordinate Mg(2+): Glu267 and Glu279. N(1)-(5-phospho-beta-D-ribosyl)glycinamide-binding positions include Asp286, Lys356, and 363–364 (RR).

This sequence belongs to the PurK/PurT family. In terms of assembly, homodimer.

The enzyme catalyses N(1)-(5-phospho-beta-D-ribosyl)glycinamide + formate + ATP = N(2)-formyl-N(1)-(5-phospho-beta-D-ribosyl)glycinamide + ADP + phosphate + H(+). It participates in purine metabolism; IMP biosynthesis via de novo pathway; N(2)-formyl-N(1)-(5-phospho-D-ribosyl)glycinamide from N(1)-(5-phospho-D-ribosyl)glycinamide (formate route): step 1/1. Its function is as follows. Involved in the de novo purine biosynthesis. Catalyzes the transfer of formate to 5-phospho-ribosyl-glycinamide (GAR), producing 5-phospho-ribosyl-N-formylglycinamide (FGAR). Formate is provided by PurU via hydrolysis of 10-formyl-tetrahydrofolate. This is Formate-dependent phosphoribosylglycinamide formyltransferase from Pseudomonas putida (strain W619).